The following is a 502-amino-acid chain: Probable glycine dehydrogenase (decarboxylating) subunit 2 (502 aa).

N6-(pyridoxal phosphate)lysine is present on lysine 273.

The protein belongs to the GcvP family. C-terminal subunit subfamily. As to quaternary structure, the glycine cleavage system is composed of four proteins: P, T, L and H. In this organism, the P 'protein' is a heterodimer of two subunits. Pyridoxal 5'-phosphate serves as cofactor.

The catalysed reaction is N(6)-[(R)-lipoyl]-L-lysyl-[glycine-cleavage complex H protein] + glycine + H(+) = N(6)-[(R)-S(8)-aminomethyldihydrolipoyl]-L-lysyl-[glycine-cleavage complex H protein] + CO2. Its function is as follows. The glycine cleavage system catalyzes the degradation of glycine. The P protein binds the alpha-amino group of glycine through its pyridoxal phosphate cofactor; CO(2) is released and the remaining methylamine moiety is then transferred to the lipoamide cofactor of the H protein. This Thermococcus onnurineus (strain NA1) protein is Probable glycine dehydrogenase (decarboxylating) subunit 2.